The primary structure comprises 88 residues: HssA/B-like protein 61 (88 aa).

The protein belongs to the hssA/B family.

This Dictyostelium discoideum (Social amoeba) protein is HssA/B-like protein 61 (hssl61).